The following is a 359-amino-acid chain: tRNA-specific 2-thiouridylase MnmA (359 aa).

ATP-binding positions include 9-16 (GMSGGVDS) and M35. The Nucleophile role is filled by C105. Residues C105 and C203 are joined by a disulfide bond. An ATP-binding site is contributed by G129. Residues 153–155 (KDQ) form an interaction with tRNA region. C203 serves as the catalytic Cysteine persulfide intermediate. Positions 309–310 (RY) are interaction with tRNA.

It belongs to the MnmA/TRMU family.

Its subcellular location is the cytoplasm. The enzyme catalyses S-sulfanyl-L-cysteinyl-[protein] + uridine(34) in tRNA + AH2 + ATP = 2-thiouridine(34) in tRNA + L-cysteinyl-[protein] + A + AMP + diphosphate + H(+). Functionally, catalyzes the 2-thiolation of uridine at the wobble position (U34) of tRNA, leading to the formation of s(2)U34. This chain is tRNA-specific 2-thiouridylase MnmA, found in Acetivibrio thermocellus (strain ATCC 27405 / DSM 1237 / JCM 9322 / NBRC 103400 / NCIMB 10682 / NRRL B-4536 / VPI 7372) (Clostridium thermocellum).